The sequence spans 1079 residues: Translation initiation factor IF-2 (1079 aa).

Composition is skewed to basic and acidic residues over residues 52–65, 75–90, and 102–134; these read VQAQ…KEGN, RDGD…KAPE, and APER…KEPQ. The tract at residues 52–488 is disordered; sequence VQAQRDGGAR…RGKKDVRPAA (437 aa). Low complexity predominate over residues 150–184; the sequence is APVAKVVEAAPAETPAPEAPAVKATVTAEAAPAKT. Over residues 185 to 194 the composition is skewed to basic and acidic residues; sequence VEPESERPQA. The span at 276–291 shows a compositional bias: low complexity; it reads AAVAQQQMQQQAAQQQ. Basic and acidic residues predominate over residues 306 to 327; the sequence is GGYRPEGQREGGYRPEGQREGG. 2 stretches are compositionally biased toward low complexity: residues 348–370 and 380–398; these read EGGY…GPRP and PGAP…APRP. The span at 419 to 429 shows a compositional bias: gly residues; it reads PRPGGFGGAPG. Basic and acidic residues predominate over residues 461–471; it reads PRGRSDDDVMR. A compositionally biased stretch (basic residues) spans 473 to 482; sequence PRGRGKRGKK. One can recognise a tr-type G domain in the interval 578 to 745; that stretch reads TRPPVVTIMG…LIAIQAEILE (168 aa). Residues 587–594 form a G1 region; that stretch reads GHVDHGKT. Residue 587–594 participates in GTP binding; the sequence is GHVDHGKT. The segment at 612–616 is G2; that stretch reads GITQH. A G3 region spans residues 633–636; that stretch reads DTPG. GTP-binding positions include 633–637 and 687–690; these read DTPGH and NKMD. Residues 687 to 690 are G4; the sequence is NKMD. The G5 stretch occupies residues 723 to 725; the sequence is SAK.

Belongs to the TRAFAC class translation factor GTPase superfamily. Classic translation factor GTPase family. IF-2 subfamily.

The protein localises to the cytoplasm. Functionally, one of the essential components for the initiation of protein synthesis. Protects formylmethionyl-tRNA from spontaneous hydrolysis and promotes its binding to the 30S ribosomal subunits. Also involved in the hydrolysis of GTP during the formation of the 70S ribosomal complex. The chain is Translation initiation factor IF-2 from Nitratidesulfovibrio vulgaris (strain DP4) (Desulfovibrio vulgaris).